The sequence spans 808 residues: Probable mannosyl-oligosaccharide glucosidase (808 aa).

Over 1-11 (MVSDMLGGNKR) the chain is Cytoplasmic. A helical; Signal-anchor for type II membrane protein transmembrane segment spans residues 12–31 (WILFGLLSFLLNCVLVSCSV). The Lumenal segment spans residues 32–808 (EDIEKAANDS…LVVNIMSENY (777 aa)). N-linked (GlcNAc...) asparagine glycosylation occurs at Asn-39. The active-site Proton donor is the Asp-580. The active-site Proton acceptor is the Glu-778.

The protein belongs to the glycosyl hydrolase 63 family.

The protein resides in the endoplasmic reticulum membrane. It carries out the reaction N(4)-(alpha-D-Glc-(1-&gt;2)-alpha-D-Glc-(1-&gt;3)-alpha-D-Glc-(1-&gt;3)-alpha-D-Man-(1-&gt;2)-alpha-D-Man-(1-&gt;2)-alpha-D-Man-(1-&gt;3)-[alpha-D-Man-(1-&gt;2)-alpha-D-Man-(1-&gt;3)-[alpha-D-Man-(1-&gt;2)-alpha-D-Man-(1-&gt;6)]-alpha-D-Man-(1-&gt;6)]-beta-D-Man-(1-&gt;4)-beta-D-GlcNAc-(1-&gt;4)-beta-D-GlcNAc)-L-asparaginyl-[protein] + H2O = N(4)-(alpha-D-Glc-(1-&gt;3)-alpha-D-Glc-(1-&gt;3)-alpha-D-Man-(1-&gt;2)-alpha-D-Man-(1-&gt;2)-alpha-D-Man-(1-&gt;3)-[alpha-D-Man-(1-&gt;2)-alpha-D-Man-(1-&gt;3)-[alpha-D-Man-(1-&gt;2)-alpha-D-Man-(1-&gt;6)]-alpha-D-Man-(1-&gt;6)]-beta-D-Man-(1-&gt;4)-beta-D-GlcNAc-(1-&gt;4)-beta-D-GlcNAc)-L-asparaginyl-[protein] + beta-D-glucose. Its function is as follows. Cleaves the distal alpha 1,2-linked glucose residue from the Glc(3)Man(9)GlcNAc(2) oligosaccharide precursor highly specifically. This Schizosaccharomyces pombe (strain 972 / ATCC 24843) (Fission yeast) protein is Probable mannosyl-oligosaccharide glucosidase.